The chain runs to 160 residues: UPF0262 protein Mmar10_1128 (160 aa).

Belongs to the UPF0262 family.

In Maricaulis maris (strain MCS10) (Caulobacter maris), this protein is UPF0262 protein Mmar10_1128.